We begin with the raw amino-acid sequence, 805 residues long: Mediator of RNA polymerase II transcription subunit 25 (805 aa).

Disordered regions lie at residues 430-455 and 786-805; these read GSAQ…GQTV and SQSQ…GFMN. Low complexity-rich tracts occupy residues 438–451 and 786–795; these read SAPS…PSMS and SQSQGSSQGL.

The protein belongs to the Mediator complex subunit 25 family. In terms of assembly, interacts with MYC2 (via N-terminus). MED25 competes with JAZ7 for binding to MYC2.

Its function is as follows. Component of the Mediator complex, a coactivator involved in the regulated transcription of nearly all RNA polymerase II-dependent genes. Mediator functions as a bridge to convey information from gene-specific regulatory proteins to the basal RNA polymerase II transcription machinery. Mediator is recruited to promoters by direct interactions with regulatory proteins and serves as a scaffold for the assembly of a functional pre-initiation complex with RNA polymerase II and the general transcription factors. Plays a positive role in wound-induced activation of jasmonate-responsive genes whose promoters are targeted by MYC2. The protein is Mediator of RNA polymerase II transcription subunit 25 of Solanum lycopersicum (Tomato).